A 136-amino-acid chain; its full sequence is 2-hydroxyisobutanoyl-CoA mutase small subunit (136 aa).

Residues 5-133 form the B12-binding domain; the sequence is PIRVLLAKVG…DSIRSLVAAR (129 aa). An adenosylcob(III)alamin-binding site is contributed by His18.

This sequence belongs to the acyl-CoA mutase small subunit family. Homotetramer composed of two large substrate-binding subunits (HcmA) and two small cobalamin-binding subunits (HcmB). Adenosylcob(III)alamin is required as a cofactor.

It carries out the reaction 2-hydroxyisobutanoyl-CoA = (3S)-3-hydroxybutanoyl-CoA. Its function is as follows. Together with HcmA, catalyzes the isomerization of 2-hydroxyisobutyryl-CoA and 3-hydroxybutyryl-CoA. Is specific for 2-hydroxyisobutyryl-CoA and (S)-3-hydroxybutyryl-CoA, and shows only very low activity with (R)-3-hydroxybutyryl-CoA, isobutyryl-CoA and butyryl-CoA. In vitro, can isomerize pivalyl-CoA and isovaleryl-CoA, with much lower efficiency. Plays a central role in the degradation of substrates bearing a tert-butyl moiety, such as the fuel oxygenate methyl tert-butyl ether (MTBE) and its metabolites. The protein is 2-hydroxyisobutanoyl-CoA mutase small subunit of Aquincola tertiaricarbonis.